Here is a 201-residue protein sequence, read N- to C-terminus: tRNA (guanine-N(7)-)-methyltransferase (201 aa).

The S-adenosyl-L-methionine site is built by E33, E58, D85, and D106. D106 is a catalytic residue. Substrate contacts are provided by residues K110, D142, and 180–183 (TTYE).

The protein belongs to the class I-like SAM-binding methyltransferase superfamily. TrmB family.

It catalyses the reaction guanosine(46) in tRNA + S-adenosyl-L-methionine = N(7)-methylguanosine(46) in tRNA + S-adenosyl-L-homocysteine. It participates in tRNA modification; N(7)-methylguanine-tRNA biosynthesis. Functionally, catalyzes the formation of N(7)-methylguanine at position 46 (m7G46) in tRNA. This is tRNA (guanine-N(7)-)-methyltransferase from Mesomycoplasma hyopneumoniae (strain J / ATCC 25934 / NCTC 10110) (Mycoplasma hyopneumoniae).